The following is a 522-amino-acid chain: Putative aminopeptidase W07G4.4 (522 aa).

Residues Lys271 and Asp276 each coordinate Zn(2+). Residue Lys283 is part of the active site. Positions 294, 354, and 356 each coordinate Zn(2+). Residue Arg358 is part of the active site.

It belongs to the peptidase M17 family. Zn(2+) serves as cofactor.

This chain is Putative aminopeptidase W07G4.4 (lap-2), found in Caenorhabditis elegans.